Here is a 384-residue protein sequence, read N- to C-terminus: Oxoeicosanoid receptor 1 (384 aa).

The tract at residues 1 to 21 (MELHNLSSPSPSLSSSVLPPS) is disordered. The Extracellular segment spans residues 1–58 (MELHNLSSPSPSLSSSVLPPSFSPSPSSAPSAFTTVGGSSGGPCHPTSSSLVSAFLAP). The N-linked (GlcNAc...) asparagine glycan is linked to N5. Residues 7–21 (SSPSPSLSSSVLPPS) are compositionally biased toward low complexity. The helical transmembrane segment at 59-79 (ILALEFVLGLVGNSLALFIFC) threads the bilayer. Residues 80–87 (IHTRPWTS) lie on the Cytoplasmic side of the membrane. Residues 88 to 108 (NTVFLVSLVAADFLLISNLPL) form a helical membrane-spanning segment. Over 109–129 (RVDYYLLHETWRFGAAACKVN) the chain is Extracellular. C126 and C198 are joined by a disulfide. The helical transmembrane segment at 130 to 152 (LFMLSTNRTASVVFLTAIALNRY) threads the bilayer. At 153-172 (LKVVQPHHVLSRASVGAAAR) the chain is on the cytoplasmic side. The helical transmembrane segment at 173–193 (VAGGLWVGILLLNGHLLLSTF) threads the bilayer. The Extracellular segment spans residues 194-215 (SGPSCLSYRVGTKPSASLRWHQ). A helical transmembrane segment spans residues 216–236 (ALYLLEFFLPLALILFAIVSI). At 237–256 (GLTIRNRGLGGQAGPQRAMR) the chain is on the cytoplasmic side. Residues 257-277 (VLAMVVAVYTICFLPSIIFGM) form a helical membrane-spanning segment. At 278-297 (ASMVAFWLSACRSLDLCTQL) the chain is on the extracellular side. The chain crosses the membrane as a helical span at residues 298–318 (FHGSLAFTYLNSVLDPVLYCF). Residues 319 to 384 (SSPNFLHQSR…SLEKEGSSQG (66 aa)) lie on the Cytoplasmic side of the membrane.

It belongs to the G-protein coupled receptor 1 family. As to expression, expressed in various tissues except brain. Expression is more intense in liver, kidney, peripheral leukocyte, lung, and spleen than in other tissues. Highly expressed in eosinophils, neutrophils, and lung macrophages.

Its subcellular location is the membrane. Receptor for eicosanoids and polyunsaturated fatty acids such as 5-oxo-6E,8Z,11Z,14Z-eicosatetraenoic acid (5-OXO-ETE), 5(S)-hydroperoxy-6E,8Z,11Z,14Z-eicosatetraenoic acid (5(S)-HPETE) and arachidonic acid. Seems to be coupled to the G(i)/G(o), families of heteromeric G proteins. In Homo sapiens (Human), this protein is Oxoeicosanoid receptor 1 (OXER1).